We begin with the raw amino-acid sequence, 78 residues long: U7-lycotoxin-Ls1h (78 aa).

Positions 1–22 (MKLIIFTGLTLLLIVSLIDVEA) are cleaved as a signal peptide. A propeptide spanning residues 23–26 (QNEG) is cleaved from the precursor.

The protein belongs to the neurotoxin 19 (CSTX) family. 07 (U7-Lctx) subfamily. Contains 4 disulfide bonds. Expressed by the venom gland.

The protein resides in the secreted. The polypeptide is U7-lycotoxin-Ls1h (Lycosa singoriensis (Wolf spider)).